We begin with the raw amino-acid sequence, 353 residues long: Variable large protein 17 (353 aa).

A signal peptide spans 1-18 (MRKRISAIIMTLFMVLVS). Cys19 is lipidated: N-palmitoyl cysteine. Cys19 is lipidated: S-diacylglycerol cysteine. The disordered stretch occupies residues 332 to 353 (EDKSVEATNTAEATTSGQQAKN). Residues 337 to 353 (EATNTAEATTSGQQAKN) show a composition bias toward polar residues.

This sequence belongs to the variable large protein (Vlp) family. Delta subfamily.

The protein resides in the cell outer membrane. In terms of biological role, the Vlp and Vsp proteins are antigenically distinct proteins, only one vlp or vsp gene is transcriptionally active at any one time. Switching between these genes is a mechanism of host immune response evasion. The chain is Variable large protein 17 from Borrelia hermsii.